The following is a 305-amino-acid chain: Putative S-adenosyl-L-methionine-dependent methyltransferase MAB_3787 (305 aa).

S-adenosyl-L-methionine contacts are provided by residues Asp-132 and 161–162 (DL).

Belongs to the UPF0677 family.

In terms of biological role, exhibits S-adenosyl-L-methionine-dependent methyltransferase activity. This is Putative S-adenosyl-L-methionine-dependent methyltransferase MAB_3787 from Mycobacteroides abscessus (strain ATCC 19977 / DSM 44196 / CCUG 20993 / CIP 104536 / JCM 13569 / NCTC 13031 / TMC 1543 / L948) (Mycobacterium abscessus).